Consider the following 242-residue polypeptide: DNA repair protein RecO (242 aa).

Belongs to the RecO family. As to quaternary structure, monomer.

Its function is as follows. Involved in DNA repair and RecF pathway recombination. This is DNA repair protein RecO from Shigella dysenteriae serotype 1 (strain Sd197).